Reading from the N-terminus, the 238-residue chain is Metal-independent phosphoserine phosphatase (238 aa).

The Tele-phosphohistidine intermediate role is filled by histidine 32. Glutamate 107 serves as the catalytic Proton donor/acceptor.

It belongs to the phosphoglycerate mutase family.

The catalysed reaction is O-phospho-L-serine + H2O = L-serine + phosphate. It catalyses the reaction O-phospho-D-serine + H2O = D-serine + phosphate. Its function is as follows. Phosphoglycerate mutase-like protein lacking PGM activity, but having a low metal-independent phosphoserine phosphatase activity in vitro. May be involved in serine biosynthesis. In Arabidopsis thaliana (Mouse-ear cress), this protein is Metal-independent phosphoserine phosphatase (IPSP).